Reading from the N-terminus, the 371-residue chain is 3-dehydroquinate synthase (371 aa).

NAD(+) is bound by residues 72 to 77 (DGEEHK), 106 to 110 (GVVGD), 130 to 131 (TT), Lys-143, Lys-152, and 170 to 173 (TLKT). Glu-185, His-248, and His-265 together coordinate Zn(2+).

Belongs to the sugar phosphate cyclases superfamily. Dehydroquinate synthase family. Co(2+) serves as cofactor. Requires Zn(2+) as cofactor. It depends on NAD(+) as a cofactor.

The protein resides in the cytoplasm. It carries out the reaction 7-phospho-2-dehydro-3-deoxy-D-arabino-heptonate = 3-dehydroquinate + phosphate. Its pathway is metabolic intermediate biosynthesis; chorismate biosynthesis; chorismate from D-erythrose 4-phosphate and phosphoenolpyruvate: step 2/7. Catalyzes the conversion of 3-deoxy-D-arabino-heptulosonate 7-phosphate (DAHP) to dehydroquinate (DHQ). The polypeptide is 3-dehydroquinate synthase (Pelotomaculum thermopropionicum (strain DSM 13744 / JCM 10971 / SI)).